We begin with the raw amino-acid sequence, 310 residues long: HPr kinase/phosphorylase (310 aa).

Residues His138 and Lys159 contribute to the active site. 153–160 (GASGIGKS) serves as a coordination point for ATP. Ser160 contacts Mg(2+). Asp177 acts as the Proton acceptor; for phosphorylation activity. Proton donor; for dephosphorylation activity in catalysis. Residues 201 to 210 (IEIRGVGIID) form an important for the catalytic mechanism of both phosphorylation and dephosphorylation region. Glu202 lines the Mg(2+) pocket. The active site involves Arg243. Residues 264–269 (PVKTGR) form an important for the catalytic mechanism of dephosphorylation region.

This sequence belongs to the HPrK/P family. Homohexamer. It depends on Mg(2+) as a cofactor.

The enzyme catalyses [HPr protein]-L-serine + ATP = [HPr protein]-O-phospho-L-serine + ADP + H(+). It catalyses the reaction [HPr protein]-O-phospho-L-serine + phosphate + H(+) = [HPr protein]-L-serine + diphosphate. Functionally, catalyzes the ATP- as well as the pyrophosphate-dependent phosphorylation of a specific serine residue in HPr, a phosphocarrier protein of the phosphoenolpyruvate-dependent sugar phosphotransferase system (PTS). HprK/P also catalyzes the pyrophosphate-producing, inorganic phosphate-dependent dephosphorylation (phosphorolysis) of seryl-phosphorylated HPr (P-Ser-HPr). The two antagonistic activities of HprK/P are regulated by several intracellular metabolites, which change their concentration in response to the absence or presence of rapidly metabolisable carbon sources (glucose, fructose, etc.) in the growth medium. Therefore, by controlling the phosphorylation state of HPr, HPrK/P is a sensor enzyme that plays a major role in the regulation of carbon metabolism and sugar transport: it mediates carbon catabolite repression (CCR), and regulates PTS-catalyzed carbohydrate uptake and inducer exclusion. The sequence is that of HPr kinase/phosphorylase from Lactococcus lactis subsp. cremoris (strain MG1363).